A 391-amino-acid polypeptide reads, in one-letter code: Lipid-A-disaccharide synthase (391 aa).

Belongs to the LpxB family.

It catalyses the reaction a lipid X + a UDP-2-N,3-O-bis[(3R)-3-hydroxyacyl]-alpha-D-glucosamine = a lipid A disaccharide + UDP + H(+). Its pathway is bacterial outer membrane biogenesis; LPS lipid A biosynthesis. In terms of biological role, condensation of UDP-2,3-diacylglucosamine and 2,3-diacylglucosamine-1-phosphate to form lipid A disaccharide, a precursor of lipid A, a phosphorylated glycolipid that anchors the lipopolysaccharide to the outer membrane of the cell. The polypeptide is Lipid-A-disaccharide synthase (Rickettsia akari (strain Hartford)).